We begin with the raw amino-acid sequence, 1036 residues long: Beta-galactosidase (1036 aa).

N97 and D197 together coordinate substrate. D197 provides a ligand contact to Na(+). Residues E411, H413, and E456 each contribute to the Mg(2+) site. Substrate-binding positions include E456 and 532-535 (EYAH). E456 functions as the Proton donor in the catalytic mechanism. Residue E532 is the Nucleophile of the active site. Position 592 (N592) interacts with Mg(2+). Na(+) contacts are provided by F596 and D599. Residues D599 and W1006 each contribute to the substrate site.

The protein belongs to the glycosyl hydrolase 2 family. Homotetramer. Requires Mg(2+) as cofactor. Na(+) is required as a cofactor.

The enzyme catalyses Hydrolysis of terminal non-reducing beta-D-galactose residues in beta-D-galactosides.. In Leuconostoc mesenteroides subsp. mesenteroides (strain ATCC 8293 / DSM 20343 / BCRC 11652 / CCM 1803 / JCM 6124 / NCDO 523 / NBRC 100496 / NCIMB 8023 / NCTC 12954 / NRRL B-1118 / 37Y), this protein is Beta-galactosidase.